The primary structure comprises 761 residues: Xaa-Pro dipeptidyl-peptidase (761 aa).

Catalysis depends on charge relay system residues Ser349, Asp469, and His499.

The protein belongs to the peptidase S15 family. Homodimer.

Its subcellular location is the cytoplasm. The enzyme catalyses Hydrolyzes Xaa-Pro-|- bonds to release unblocked, N-terminal dipeptides from substrates including Ala-Pro-|-p-nitroanilide and (sequentially) Tyr-Pro-|-Phe-Pro-|-Gly-Pro-|-Ile.. Functionally, removes N-terminal dipeptides sequentially from polypeptides having unsubstituted N-termini provided that the penultimate residue is proline. This chain is Xaa-Pro dipeptidyl-peptidase, found in Streptococcus equi subsp. zooepidemicus (strain H70).